Reading from the N-terminus, the 78-residue chain is Major outer membrane lipoprotein Lpp (78 aa).

A signal peptide spans 1-20 (MNRTKLVLGAVILASTMLAG). Residue Cys-21 is the site of N-palmitoyl cysteine attachment. Cys-21 is lipidated: S-diacylglycerol cysteine. 2 repeats span residues 24–34 (NAKIDQLSSDV) and 38–48 (NAKVDQLSNDV). Residues 27 to 75 (IDQLSSDVQTLNAKVDQLSNDVNAVRADVQAAKDDAARANQRLDNQAQA) are a coiled coil. Lys-78 is subject to N6-murein peptidoglycan lysine.

It belongs to the Lpp family. As to quaternary structure, homotrimer.

Its subcellular location is the cell outer membrane. The protein resides in the secreted. It localises to the cell wall. In terms of biological role, a highly abundant outer membrane lipoprotein that controls the distance between the inner and outer membranes. The only protein known to be covalently linked to the peptidoglycan network (PGN). Also non-covalently binds the PGN. The link between the cell outer membrane and PGN contributes to maintenance of the structural and functional integrity of the cell envelope, and maintains the correct distance between the PGN and the outer membrane. This is Major outer membrane lipoprotein Lpp from Yersinia pestis.